Reading from the N-terminus, the 233-residue chain is Pirin-like protein YhaK (233 aa).

It belongs to the pirin family. In terms of assembly, monomer.

Its subcellular location is the cytoplasm. Functionally, does not have quercetin 2,3-dioxygenase activity. The polypeptide is Pirin-like protein YhaK (yhaK) (Escherichia coli O157:H7).